The chain runs to 127 residues: uncharacterized protein (127 aa).

The disordered stretch occupies residues 1–24 (PLKTKPIDNNLPHRTGYNQASKQQ).

This is an uncharacterized protein from Homo sapiens (Human).